Here is a 172-residue protein sequence, read N- to C-terminus: MEGAIQGSDAREQANSERWDGGCGGTITPFKLPDESPGLHEWRLHNSEESEDKDHPLGFKESWGFGKVVFKRYLRYDGTEASLHRALGSWERGSVNDAASRFLGLGQVGCTYSIRFRGSCLTLSGGSRTLQRLIEMAIRTKRTMLQLTPSEVEGNVSRGRPEGAKAFEKESE.

Disordered regions lie at residues 1-38 (MEGA…ESPG) and 152-172 (VEGN…KESE). 2 stretches are compositionally biased toward basic and acidic residues: residues 9–20 (DAREQANSERWD) and 159–172 (GRPE…KESE).

The protein belongs to the tombusvirus protein p19 family. Homodimer.

In terms of biological role, viral suppressor of RNA silencing which binds specifically to silencing RNAs (siRNAs). Acts as a molecular caliper to specifically select siRNAs based on the length of the duplex region of the RNA. This chain is RNA silencing suppressor p19, found in Havel river virus (HaRV).